Here is a 151-residue protein sequence, read N- to C-terminus: tRNA-specific adenosine deaminase (151 aa).

Positions 4–122 (NRDSYWMKIA…PFLKKIFINL (119 aa)) constitute a CMP/dCMP-type deaminase domain. Residue histidine 55 coordinates Zn(2+). Glutamate 57 acts as the Proton donor in catalysis. The Zn(2+) site is built by cysteine 85 and cysteine 88.

Belongs to the cytidine and deoxycytidylate deaminase family. As to quaternary structure, homodimer. Requires Zn(2+) as cofactor.

It catalyses the reaction adenosine(34) in tRNA + H2O + H(+) = inosine(34) in tRNA + NH4(+). In terms of biological role, catalyzes the deamination of adenosine to inosine at the wobble position 34 of tRNA(Arg2). In Buchnera aphidicola subsp. Schizaphis graminum (strain Sg), this protein is tRNA-specific adenosine deaminase.